Reading from the N-terminus, the 209-residue chain is MTTESQSAVKTILHVESSLFGEGGVSSQLSTELVTKLQNKYADVNAKVNTNVKIVKRNLAAEPIPHLDLATITAIGEGKPVIGDTLIQELKDADIVVLGVPMYNFGVPSGLKAWFDHIARAGSTFKYTETGPVGLLENKKVYVVTSRGGYHKDAASDVEVPFLKTFLGFLGLNDVEFIYAEGLNLSGKREQGLADASAKIAALVGEEAA.

FMN is bound by residues Ser-18, Met-102–Phe-105, and Ser-146–Gly-149.

This sequence belongs to the azoreductase type 1 family. Homodimer. It depends on FMN as a cofactor.

It carries out the reaction 2 a quinone + NADH + H(+) = 2 a 1,4-benzosemiquinone + NAD(+). The catalysed reaction is N,N-dimethyl-1,4-phenylenediamine + anthranilate + 2 NAD(+) = 2-(4-dimethylaminophenyl)diazenylbenzoate + 2 NADH + 2 H(+). Its function is as follows. Quinone reductase that provides resistance to thiol-specific stress caused by electrophilic quinones. Also exhibits azoreductase activity. Catalyzes the reductive cleavage of the azo bond in aromatic azo compounds to the corresponding amines. The chain is FMN-dependent NADH:quinone oxidoreductase from Saccharophagus degradans (strain 2-40 / ATCC 43961 / DSM 17024).